The chain runs to 446 residues: Oxysterols receptor LXR-beta (446 aa).

The segment at 1 to 69 (MSSPTSSLDT…PERKRKKGPA (69 aa)) is disordered. The transactivation AF-1; required for ligand-independent transactivation function stretch occupies residues 1-76 (MSSPTSSLDT…GPAPKMLGHE (76 aa)). Residues 17 to 28 (SPQPSTSATSPT) show a composition bias toward low complexity. Residues 75-152 (HELCRVCGDK…AGMREQCVLS (78 aa)) constitute a DNA-binding region (nuclear receptor). 2 NR C4-type zinc fingers span residues 78–98 (CRVCGDKASGFHYNVLSCEGC) and 116–140 (CRGSGTCQMDAFMRRKCQLCRLRKC). The segment at 159–201 (KRIQKQQQQQPPPPSEPAASSSGRPAASPGTSEASSQGSGEGE) is disordered. A compositionally biased stretch (low complexity) spans 175–196 (PAASSSGRPAASPGTSEASSQG). Residues 205–446 (LTAAQELMIQ…LLSEIWDVHE (242 aa)) form a transactivation AF-2; required for ligand-dependent transactivation function; mediates interaction with CCAR2 region. The region spanning 208 to 446 (AQELMIQQLV…LLSEIWDVHE (239 aa)) is the NR LBD domain. Glycyl lysine isopeptide (Lys-Gly) (interchain with G-Cter in SUMO2) cross-links involve residues lysine 395 and lysine 433.

Belongs to the nuclear hormone receptor family. NR1 subfamily. Forms a heterodimer with RXR. Interacts with CCAR2 (via N-terminus) in a ligand-independent manner. Interacts (when sumoylated) with GPS2; interaction with GPS2 onto hepatic acute phase protein promoters prevents N-Cor corepressor complex dissociation. Interacts with ABCA12 and ABCA1; this interaction is required for ABCA1 localization to the cell surface and is necessary for its normal activity and stability. Post-translationally, sumoylated by SUMO2 at Lys-395 and Lys-433 during the hepatic acute phase response, leading to promote interaction with GPS2 and prevent N-Cor corepressor complex dissociation. Ubiquitous.

It is found in the nucleus. Functionally, nuclear receptor that exhibits a ligand-dependent transcriptional activation activity. Binds preferentially to double-stranded oligonucleotide direct repeats having the consensus half-site sequence 5'-AGGTCA-3' and 4-nt spacing (DR-4). Regulates cholesterol uptake through MYLIP-dependent ubiquitination of LDLR, VLDLR and LRP8; DLDLR and LRP8. Interplays functionally with RORA for the regulation of genes involved in liver metabolism. Induces LPCAT3-dependent phospholipid remodeling in endoplasmic reticulum (ER) membranes of hepatocytes, driving SREBF1 processing and lipogenesis. Via LPCAT3, triggers the incorporation of arachidonate into phosphatidylcholines of ER membranes, increasing membrane dynamics and enabling triacylglycerols transfer to nascent very low-density lipoprotein (VLDL) particles. Via LPCAT3 also counteracts lipid-induced ER stress response and inflammation, likely by modulating SRC kinase membrane compartmentalization and limiting the synthesis of lipid inflammatory mediators. Plays an anti-inflammatory role during the hepatic acute phase response by acting as a corepressor: inhibits the hepatic acute phase response by preventing dissociation of the N-Cor corepressor complex. This chain is Oxysterols receptor LXR-beta (Nr1h2), found in Mus musculus (Mouse).